The primary structure comprises 535 residues: Zinc finger protein squeeze (535 aa).

2 stretches are compositionally biased toward low complexity: residues Met70–Gln97 and Ser131–Ser142. The segment at Met70–Pro157 is disordered. The segment covering Glu145–Lys156 has biased composition (basic and acidic residues). 5 C2H2-type zinc fingers span residues Tyr158–His180, Tyr186–His208, Tyr214–His238, Phe244–His266, and His275–His297. Thr395 is subject to Phosphothreonine. 2 positions are modified to phosphoserine: Ser399 and Ser401. A disordered region spans residues Thr417–Ser475. Residues Gln419–Gln443 show a composition bias toward low complexity. Ser475 carries the phosphoserine modification. Phosphotyrosine is present on residues Tyr479 and Tyr481.

It belongs to the krueppel C2H2-type zinc-finger protein family. Interacts with nab; which acts as a coactivator. Interacts with ap. As to expression, largely restricted to subsets of cells in the CNS throughout embryonic and first instar larval (L1) development. Expressed in a population of lateral interneurons, primarily projecting axons in the anterior and posterior commissures. Overlaps with ap within the thoracic ap cluster. By stage 17, it is restricted to 2 neurons within the ap-cluster, with one neuron typically continuing to display higher levels of expression. Selectively expressed at higher levels within the FMRFa Tv neurons. Expressed in all leucokinergic cells.

Its subcellular location is the nucleus. In terms of biological role, transcription factor involved in neuronal fate specification. First required in embryonic CNS development to define the number of cells that express apterous (ap) in the ap thoracic cluster of interneurons. Later on, it plays a central role in the combinatorial code of transcription factors that specifies the fate of the Tv neuron in the ap cluster by participating in the transcription regulation of FMRFa in Tv cells. Also required for projection neuron dendritic targeting. The polypeptide is Zinc finger protein squeeze (sqz) (Drosophila melanogaster (Fruit fly)).